We begin with the raw amino-acid sequence, 170 residues long: MNLTLLATEGFGLNFNLFETNILNWAVVVFGLYKFLPSFLGKMLQKRREGILLELKDAEDRLVNATKALDKAKKDLSSAEEKASQIKADSFKRSESIRMESEKKAIEEMARIKQSAISDESSEASRAISQLRKEAVELAIKKALDSLPNRLDSTTQENLVTQSINNIEVN.

A helical membrane pass occupies residues 15–37; sequence FNLFETNILNWAVVVFGLYKFLP.

The protein belongs to the ATPase B chain family. As to quaternary structure, F-type ATPases have 2 components, F(1) - the catalytic core - and F(0) - the membrane proton channel. F(1) has five subunits: alpha(3), beta(3), gamma(1), delta(1), epsilon(1). F(0) has four main subunits: a(1), b(1), b'(1) and c(10-14). The alpha and beta chains form an alternating ring which encloses part of the gamma chain. F(1) is attached to F(0) by a central stalk formed by the gamma and epsilon chains, while a peripheral stalk is formed by the delta, b and b' chains.

The protein localises to the cellular thylakoid membrane. F(1)F(0) ATP synthase produces ATP from ADP in the presence of a proton or sodium gradient. F-type ATPases consist of two structural domains, F(1) containing the extramembraneous catalytic core and F(0) containing the membrane proton channel, linked together by a central stalk and a peripheral stalk. During catalysis, ATP synthesis in the catalytic domain of F(1) is coupled via a rotary mechanism of the central stalk subunits to proton translocation. In terms of biological role, component of the F(0) channel, it forms part of the peripheral stalk, linking F(1) to F(0). The protein is ATP synthase subunit b of Prochlorococcus marinus (strain MIT 9312).